Here is a 151-residue protein sequence, read N- to C-terminus: Large ribosomal subunit protein bL9 (151 aa).

The protein belongs to the bacterial ribosomal protein bL9 family.

Functionally, binds to the 23S rRNA. In Pelobacter propionicus (strain DSM 2379 / NBRC 103807 / OttBd1), this protein is Large ribosomal subunit protein bL9.